Consider the following 1209-residue polypeptide: DNA-directed RNA polymerase subunit beta' (1209 aa).

The Zn(2+) site is built by Cys60, Cys62, Cys75, and Cys78. 3 residues coordinate Mg(2+): Asp450, Asp452, and Asp454. Zn(2+)-binding residues include Cys819, Cys893, Cys900, and Cys903.

The protein belongs to the RNA polymerase beta' chain family. As to quaternary structure, the RNAP catalytic core consists of 2 alpha, 1 beta, 1 beta' and 1 omega subunit. When a sigma factor is associated with the core the holoenzyme is formed, which can initiate transcription. Mg(2+) is required as a cofactor. It depends on Zn(2+) as a cofactor.

It catalyses the reaction RNA(n) + a ribonucleoside 5'-triphosphate = RNA(n+1) + diphosphate. Functionally, DNA-dependent RNA polymerase catalyzes the transcription of DNA into RNA using the four ribonucleoside triphosphates as substrates. The sequence is that of DNA-directed RNA polymerase subunit beta' from Streptococcus mutans serotype c (strain ATCC 700610 / UA159).